The chain runs to 87 residues: MENDKGQLVELYVPRKCSATNRIIKAKDHSSVQINIAQVDEEGRAIPGEYVTYALSGYIRARGEADDSLNRLAQQDGLLKNVWSYSR.

Belongs to the eukaryotic ribosomal protein eS21 family. In terms of assembly, component of the small ribosomal subunit. Mature ribosomes consist of a small (40S) and a large (60S) subunit. The 40S subunit contains about 33 different proteins and 1 molecule of RNA (18S). The 60S subunit contains about 49 different proteins and 3 molecules of RNA (25S, 5.8S and 5S).

The protein resides in the cytoplasm. In terms of biological role, required for the processing of the 20S rRNA-precursor to mature 18S rRNA in a late step of the maturation of 40S ribosomal subunits. Has a physiological role leading to 18S rRNA stability. In Kluyveromyces lactis (strain ATCC 8585 / CBS 2359 / DSM 70799 / NBRC 1267 / NRRL Y-1140 / WM37) (Yeast), this protein is Small ribosomal subunit protein eS21 (RPS21).